A 280-amino-acid polypeptide reads, in one-letter code: ESX-1 secretion-associated protein EspJ (280 aa).

The residue at position 70 (S70) is a Phosphoserine. Low complexity-rich tracts occupy residues 167–181 (QTIS…QSAQ) and 246–280 (PAQA…TTTL). A disordered region spans residues 167 to 280 (QTISQTAQQA…TPAPSTTTTL (114 aa)).

Post-translationally, phosphorylated at Ser-70.

It localises to the secreted. Its function is as follows. Could be involved in regulation of growth and intracellular survival. The protein is ESX-1 secretion-associated protein EspJ of Mycobacterium tuberculosis (strain CDC 1551 / Oshkosh).